Consider the following 246-residue polypeptide: Osmotin-like protein TPM-1 (246 aa).

Positions 1–21 (MAYLRSSFVFFLLAFVTYTYA) are cleaved as a signal peptide. Intrachain disulfides connect cysteine 30-cysteine 225, cysteine 72-cysteine 82, cysteine 87-cysteine 93, cysteine 141-cysteine 213, cysteine 146-cysteine 196, cysteine 154-cysteine 164, cysteine 168-cysteine 177, and cysteine 178-cysteine 183.

The protein belongs to the thaumatin family.

The protein localises to the vacuole. The enzyme catalyses Endohydrolysis of (1-&gt;3)- or (1-&gt;4)-linkages in beta-D-glucans when the glucose residue whose reducing group is involved in the linkage to be hydrolyzed is itself substituted at C-3.. Its function is as follows. Antifungal protein that inhibits the growth of several phytopathogenic fungi (e.g. Trichothecium roseum, Fusarium oxysporum, Phytophthora citrophthora and Colletotrichum coccodes). May bind to beta-glucans and have beta-1,3-D-glucanase activity. The polypeptide is Osmotin-like protein TPM-1 (Solanum lycopersicum (Tomato)).